A 572-amino-acid chain; its full sequence is Serine/threonine-protein kinase pak-1 (572 aa).

Disordered stretches follow at residues 1 to 71 (MKAF…SRPS) and 156 to 195 (QPYS…QGVP). In terms of domain architecture, CRIB spans 67–80 (ISRPSNFEHTIHVG). Residues 81–294 (YDPKTGEFTG…IVSIGNPDRK (214 aa)) form a linker region. Residues 178–195 (PMTTSTSSAGYNSKQGVP) are compositionally biased toward polar residues. The region spanning 295–546 (YRKVDKIGSG…ASQLLTHPFL (252 aa)) is the Protein kinase domain. ATP is bound by residues 301-309 (IGSGASGSV) and K324. The active-site Proton acceptor is the D414.

Belongs to the protein kinase superfamily. STE Ser/Thr protein kinase family. STE20 subfamily. Interacts with cdc-42 (GTP-bound form) and cedd-10 (GTP-bound form). The cofactor is Mg(2+). Mn(2+) serves as cofactor. Specifically colocalized with cdc-42 and ced-10 at all hypodermal cell boundaries during embryo elongation throughout the second phase of embryogenesis. Expressed mainly in pharyngeal muscles, the CAN neurons, motor neurons in the ventral nerve cord, several cells in the tail region (including the B and Y cells from L1 to adult, the hypodermal blast cell T in the L1 and some of its progeny in later stages), and the distal tip cells.

It localises to the cell membrane. Its subcellular location is the cytoplasm. The protein resides in the cell projection. The protein localises to the axon. It is found in the perikaryon. The catalysed reaction is L-seryl-[protein] + ATP = O-phospho-L-seryl-[protein] + ADP + H(+). The enzyme catalyses L-threonyl-[protein] + ATP = O-phospho-L-threonyl-[protein] + ADP + H(+). Required for hypodermal cell fusion, together with cdc-42 and ced-10, leading to embryonic body elongation, which involves dramatic cytoskeletal reorganization. Plays a redundant role with max-2 in dorsal axonal guidance in ventral cord commissural motoneurons and in P neuroblast migration. Acts probably downstream of Rho GTPases mig-2 and ced-10 to regulate these 2 processes. Involved in orientating axonal growth of HSN neurons. During gonad morphogenesis and probably in association with pix-1 and git-1, involved in the migration of distal tip cell (DTC) and in maintaining their sharp tapering morphology. In addition, plays a redundant role with max-2 in DTC-mediated guidance of gonad elongation. May phosphorylate mlc-4. This is Serine/threonine-protein kinase pak-1 (pak-1) from Caenorhabditis elegans.